The primary structure comprises 564 residues: Pyranose 2-oxidase (564 aa).

Residues 1–25 constitute a propeptide that is removed on maturation; it reads MPIRLSKEKINDLLQRSQGDLTSSQ. His-158 is subject to Tele-8alpha-FAD histidine. Residues Gln-392 and His-394 each contribute to the substrate site. Catalysis depends on His-498, which acts as the Proton acceptor. Residue Asn-541 is part of the active site.

It belongs to the GMC oxidoreductase family. In terms of assembly, homotetramer. It depends on FAD as a cofactor.

It carries out the reaction D-glucose + O2 = 2-dehydro-D-glucose + H2O2. Functionally, catalyzes the oxidation of various aldopyranoses and disaccharides on carbon-2 to the corresponding 2-keto sugars concomitant with the reduction of O(2) to H(2)O(2). The preferred substrate is D-glucose which is converted to 2-dehydro-D-glucose. Acts also on D-xylose, L-sorbose, D-galactose and 1,5-anhydroglucitol, a diagnostic marker of diabetes mellitus. This is Pyranose 2-oxidase (p2ox) from Tricholoma matsutake (Matsutake mushroom).